The chain runs to 309 residues: Porphobilinogen deaminase (309 aa).

An S-(dipyrrolylmethanemethyl)cysteine modification is found at Cys-241.

Belongs to the HMBS family. As to quaternary structure, monomer. Requires dipyrromethane as cofactor.

It carries out the reaction 4 porphobilinogen + H2O = hydroxymethylbilane + 4 NH4(+). It functions in the pathway porphyrin-containing compound metabolism; protoporphyrin-IX biosynthesis; coproporphyrinogen-III from 5-aminolevulinate: step 2/4. Functionally, tetrapolymerization of the monopyrrole PBG into the hydroxymethylbilane pre-uroporphyrinogen in several discrete steps. The sequence is that of Porphobilinogen deaminase from Bacillus anthracis (strain A0248).